The following is a 304-amino-acid chain: tRNA pseudouridine synthase B (304 aa).

Asp38 functions as the Nucleophile in the catalytic mechanism.

It belongs to the pseudouridine synthase TruB family. Type 1 subfamily.

It catalyses the reaction uridine(55) in tRNA = pseudouridine(55) in tRNA. Responsible for synthesis of pseudouridine from uracil-55 in the psi GC loop of transfer RNAs. The polypeptide is tRNA pseudouridine synthase B (Listeria monocytogenes serovar 1/2a (strain ATCC BAA-679 / EGD-e)).